We begin with the raw amino-acid sequence, 822 residues long: Calpain-3 (822 aa).

Residues 1–36 (MPTVISASVAPRTGAEPMSPGPIAQAAQDKGTEAGG) are disordered. In terms of domain architecture, Calpain catalytic spans 74-418 (LFVDPEFPPD…FTKLEICNLT (345 aa)). Active-site residues include Cys129, His335, and Asn359. Positions 419-587 (ADALESDKLQ…KRNLSEEVEN (169 aa)) are domain III. Residues 588–650 (TISVDRPVKK…EPGNTDQESE (63 aa)) form a linker region. A disordered region spans residues 604–652 (IFVSDRANSNKELGVDQETEEGKDNTSPDKQAKSPQLEPGNTDQESEEQ). Residues 623–635 (EEGKDNTSPDKQA) show a composition bias toward basic and acidic residues. EF-hand domains lie at 650–684 (EEQRQFRNIFRQIAGDDMEICADELKNVLNRVVNK), 693–726 (FTLESCRSMIALMDTDGSGRLNLQEFHHLWKKIK), 723–758 (KKIKTWQKIFKHYDTDQSGTINSYEMRNAVKDAGFH), and 788–822 (VRLEGMFRAFNAFDKDGDGIIKLNVLEWLQLTMYA). Residues 651 to 822 (EQRQFRNIFR…LEWLQLTMYA (172 aa)) are domain IV. Positions 663, 666, 668, 673, 706, 708, 710, 712, 717, 736, 738, 740, 742, 747, 801, 803, 805, and 807 each coordinate Ca(2+).

This sequence belongs to the peptidase C2 family. Homodimer; via EF-hand domain 4. Interacts with TTN/titin. Interacts with CMYA5; this interaction, which results in CMYA5 proteolysis, may protect CAPN3 from autolysis. Interacts with SIMC1. Interacts with UTP25; the interaction is required for CAPN3 translocation to the nucleolus. Skeletal muscle.

The protein resides in the cytoplasm. It is found in the nucleus. The protein localises to the nucleolus. The catalysed reaction is Broad endopeptidase activity.. Activated by micromolar concentrations of calcium and inhibited by calpastatin. In terms of biological role, calcium-regulated non-lysosomal thiol-protease. Proteolytically cleaves CTBP1. Mediates, with UTP25, the proteasome-independent degradation of p53/TP53. The protein is Calpain-3 (CAPN3) of Bos taurus (Bovine).